The sequence spans 376 residues: Transcription initiation factor IIA subunit 1 (376 aa).

Ala2 carries the N-acetylalanine modification. Composition is skewed to low complexity over residues 69–79 (QVQQQHQPQQQ) and 89–105 (QAQP…TQQV). Disordered stretches follow at residues 69–107 (QVQQ…QVLI), 247–266 (QAQI…AQTQ), and 274–329 (DGTG…QELF). Phosphoserine; by TAF1 occurs at positions 280, 281, 316, and 321. A compositionally biased stretch (acidic residues) spans 280 to 329 (SSEEDEDEEEDYDDDEEEDKEKDGAEDGQVEEEPLNSEDDVSDEEGQELF). DNA contacts are provided by His343 and Arg344.

Belongs to the TFIIA subunit 1 family. TFIIA is a heterodimer of the large unprocessed subunit 1 and a small subunit gamma. It was originally believed to be a heterotrimer of an alpha (p35), a beta (p19) and a gamma subunit (p12). TFIIA forms a complex with TBP. Part of TBP-based Pol II pre-initiation complex (PIC), in which Pol II core assembles with general transcription factors and other specific initiation factors including GTF2E1, GTF2E2, GTF2F1, GTF2F2, TCEA1, ERCC2, ERCC3, GTF2H2, GTF2H3, GTF2H4, GTF2H5, GTF2A1, GTF2A2, GTF2B and TBP; this large multi-subunit PIC complex mediates DNA unwinding and targets Pol II core to the transcription start site where the first phosphodiester bond forms. The alpha and beta subunits are postranslationally produced from the precursor form by TASP1. The cleavage promotes proteasomal degradation.

Its subcellular location is the nucleus. TFIIA is a component of the transcription machinery of RNA polymerase II and plays an important role in transcriptional activation. TFIIA in a complex with TBP mediates transcriptional activity. This is Transcription initiation factor IIA subunit 1 (GTF2A1) from Homo sapiens (Human).